The following is a 162-amino-acid chain: NADH-quinone oxidoreductase subunit I 2 (162 aa).

4Fe-4S ferredoxin-type domains follow at residues leucine 52–glycine 82 and valine 93–asparagine 122. The [4Fe-4S] cluster site is built by cysteine 62, cysteine 65, cysteine 68, cysteine 72, cysteine 102, cysteine 105, cysteine 108, and cysteine 112.

It belongs to the complex I 23 kDa subunit family. NDH-1 is composed of 14 different subunits. Subunits NuoA, H, J, K, L, M, N constitute the membrane sector of the complex. [4Fe-4S] cluster is required as a cofactor.

It is found in the cell inner membrane. The enzyme catalyses a quinone + NADH + 5 H(+)(in) = a quinol + NAD(+) + 4 H(+)(out). NDH-1 shuttles electrons from NADH, via FMN and iron-sulfur (Fe-S) centers, to quinones in the respiratory chain. The immediate electron acceptor for the enzyme in this species is believed to be ubiquinone. Couples the redox reaction to proton translocation (for every two electrons transferred, four hydrogen ions are translocated across the cytoplasmic membrane), and thus conserves the redox energy in a proton gradient. In Rhodopseudomonas palustris (strain BisB5), this protein is NADH-quinone oxidoreductase subunit I 2.